The sequence spans 303 residues: Target of rapamycin complex subunit LST8 (303 aa).

WD repeat units lie at residues 1–27 (MSVI…CSRT), 30–68 (HSDS…PNPV), 73–112 (GHRG…IPRN), 114–153 (KHNA…CTHQ), 157–196 (EDDT…DASH), 205–244 (AHST…KLET), and 248–287 (GHQR…IVRQ).

Belongs to the WD repeat LST8 family. The target of rapamycin complex 1 (TORC1) is composed of at least KOG1, LST8, TCO89 and either TOR1 (TORC1-A) or TOR2 (TORC1-B). TORC1 binds to and is inhibited by FKBP-rapamycin. Interacts with PIB2; following activation of PIB2 by glutamine or cysteine and as part of the TORC1 complex. The target of rapamycin complex 2 (TORC2) is composed of at least AVO1, AVO2, BIT61, LST8, TOR2 and TSC11. TORC2 forms a homodimer. Contrary to TORC1, TORC2 does not bind to and is not sensitive to FKBP-rapamycin. LST8 binds to the C-terminal kinase domain in TOR2.

It is found in the cell membrane. The protein resides in the vacuole membrane. Functionally, essential component of both TORC1 and TORC2. TORC1 regulates multiple cellular processes to control cell growth in response to environmental signals. Nutrient limitation and environmental stress signals cause inactivation of TORC1. Active TORC1 positively controls ribosome biogenesis via control of rRNA, ribosomal protein and tRNA gene expression, and rRNA processing. TORC1 positively controls protein biosynthesis by regulation of mRNA stability, translation initiation factor activity, and high-affinity amino acid permeases that serve to provide amino acids for use by the translation machinery. TORC1 also promotes growth by sequestering a number of nutrient and general stress-responsive transcription factors in the cytoplasm. TORC1 negatively controls macroautophagy, a process to recycle surplus cytoplasmic mass under nutrient starvation conditions. LST8 is involved in the negative regulation of transcription factors GLN3 and RTG1-RTG3, limiting the synthesis of alpha-ketoglutarate, glutamate and glutamine. LST8 is required for targeting of amino acid permeases (AAPs) to the plasma membrane. TORC2 regulates cell cycle-dependent polarization of the actin-cytoskeleton, cell wall integrity, and receptor endocytosis. TORC2 controls polarity of the actin cytoskeleton, which is required for orienting the secretory pathway toward discrete growth sites, via the RHO1/PKC1/MAPK cell integrity pathway. LST8 is involved in maintenance of cell wall integrity. LST8 modulates TOR2 kinase activity. The protein is Target of rapamycin complex subunit LST8 of Saccharomyces cerevisiae (strain ATCC 204508 / S288c) (Baker's yeast).